A 137-amino-acid polypeptide reads, in one-letter code: Fructose-bisphosphate aldolase C (137 aa).

Lys-3 functions as the Schiff-base intermediate with dihydroxyacetone-P in the catalytic mechanism.

It belongs to the class I fructose-bisphosphate aldolase family. Homotetramer.

It catalyses the reaction beta-D-fructose 1,6-bisphosphate = D-glyceraldehyde 3-phosphate + dihydroxyacetone phosphate. The protein operates within carbohydrate degradation; glycolysis; D-glyceraldehyde 3-phosphate and glycerone phosphate from D-glucose: step 4/4. The chain is Fructose-bisphosphate aldolase C (ALDOC) from Gallus gallus (Chicken).